Here is a 127-residue protein sequence, read N- to C-terminus: MORF4 family-associated protein 1 (127 aa).

The disordered stretch occupies residues 76 to 97 (ESALNHLQNPDDGAEGRGTKRC). Residues 92 to 126 (RGTKRCEKAEEKAKEIAKMAEMLVELVRRIEKSES) are a coiled coil.

The protein belongs to the MORF4 family-associated protein family. In terms of assembly, found in a complex composed of MORF4L1, MRFAP1 and RB1. Interacts via its N-terminus with MORF4L1. Interacts with CSTB and MORF4L2.

Its subcellular location is the nucleus. The protein localises to the cytoplasm. The protein resides in the perinuclear region. The polypeptide is MORF4 family-associated protein 1 (Bos taurus (Bovine)).